Consider the following 244-residue polypeptide: Glucosamine-6-phosphate deaminase (244 aa).

The Proton acceptor; for enolization step role is filled by Asp67. The For ring-opening step role is filled by Asn136. His138 (proton acceptor; for ring-opening step) is an active-site residue. Glu143 serves as the catalytic For ring-opening step.

It belongs to the glucosamine/galactosamine-6-phosphate isomerase family. NagB subfamily.

It catalyses the reaction alpha-D-glucosamine 6-phosphate + H2O = beta-D-fructose 6-phosphate + NH4(+). Its pathway is amino-sugar metabolism; N-acetylneuraminate degradation; D-fructose 6-phosphate from N-acetylneuraminate: step 5/5. Functionally, catalyzes the reversible isomerization-deamination of glucosamine 6-phosphate (GlcN6P) to form fructose 6-phosphate (Fru6P) and ammonium ion. In Clostridium botulinum (strain Loch Maree / Type A3), this protein is Glucosamine-6-phosphate deaminase.